A 355-amino-acid chain; its full sequence is MSAFKPLVFSGVQPTGNLHLGNYLGAIKKFVALQETSDCIYCVVDLHSLTAQLVHEDLADQTRSITAAFLASGIDPKKHIVFNQSRVMQHAELAWIFNCVARIGWMNKMTQFKDKAGKDRENASLGLLAYPSLMAADILLYRATHVPVGEDQKQHLELTRDIAQKFNNDFSDRIARLGVGVEMQVGEETVNGFFPITEPVIGGPAARIMSLRDGSKKMSKSDPSDLSRINLTDDADTISKKIRKAKTDPEALPSEVSGLESRPEAENLVGIYAGLAEMSKADVLKEFGGQQFSVFKPALADLAVEKLAPIAGEMRRIEGDRAYVDAVLRDGGERAGVLAETTMKTVRDIIGLLQG.

Residues 13–15 (QPT) and 21–22 (GN) contribute to the ATP site. Residues 14-22 (PTGNLHLGN) carry the 'HIGH' region motif. L-tryptophan is bound at residue D137. ATP is bound by residues 149 to 151 (GED), I208, and 217 to 221 (KMSKS). The 'KMSKS' region motif lies at 217–221 (KMSKS).

The protein belongs to the class-I aminoacyl-tRNA synthetase family. Homodimer.

The protein resides in the cytoplasm. The enzyme catalyses tRNA(Trp) + L-tryptophan + ATP = L-tryptophyl-tRNA(Trp) + AMP + diphosphate + H(+). Functionally, catalyzes the attachment of tryptophan to tRNA(Trp). The chain is Tryptophan--tRNA ligase from Mesorhizobium japonicum (strain LMG 29417 / CECT 9101 / MAFF 303099) (Mesorhizobium loti (strain MAFF 303099)).